A 493-amino-acid polypeptide reads, in one-letter code: 3-octaprenyl-4-hydroxybenzoate carboxy-lyase (493 aa).

Asn-172 serves as a coordination point for Mn(2+). Residues Ile-175 to Arg-177, Arg-189 to Leu-191, and Arg-194 to Gly-195 contribute to the prenylated FMN site. A Mn(2+)-binding site is contributed by Glu-238. The Proton donor role is filled by Asp-287.

This sequence belongs to the UbiD family. In terms of assembly, homohexamer. It depends on prenylated FMN as a cofactor. Requires Mn(2+) as cofactor.

It is found in the cell membrane. It catalyses the reaction a 4-hydroxy-3-(all-trans-polyprenyl)benzoate + H(+) = a 2-(all-trans-polyprenyl)phenol + CO2. It participates in cofactor biosynthesis; ubiquinone biosynthesis. In terms of biological role, catalyzes the decarboxylation of 3-octaprenyl-4-hydroxy benzoate to 2-octaprenylphenol, an intermediate step in ubiquinone biosynthesis. In Shewanella pealeana (strain ATCC 700345 / ANG-SQ1), this protein is 3-octaprenyl-4-hydroxybenzoate carboxy-lyase.